Reading from the N-terminus, the 176-residue chain is MKATFVLACLLVIAAVSHADLLPKRMDANAFRMSFGKRSVSNPAEAKRMDPNAFRMSFGKRSAEQNEQANKEDKATSDKLYDDTKFEEMKRMDANAFRMSFGKRSDAHQAADDQVEYVNDDFSLPEQKRMDANAFRMSFGKRVNLDPNSFRMSFGKRSTVGYNLDARNYFVGLGRR.

A signal peptide spans 1 to 19 (MKATFVLACLLVIAAVSHA). The tract at residues 59 to 79 (GKRSAEQNEQANKEDKATSDK) is disordered. Basic and acidic residues predominate over residues 61-79 (RSAEQNEQANKEDKATSDK).

Functionally, in AWC olfactory sensory neurons, required for the detection of preferred food sources. In Caenorhabditis elegans, this protein is Neuropeptide-like protein 1 (nlp-1).